We begin with the raw amino-acid sequence, 77 residues long: Putative membrane protein insertion efficiency factor (77 aa).

The protein belongs to the UPF0161 family.

Its subcellular location is the cell membrane. In terms of biological role, could be involved in insertion of integral membrane proteins into the membrane. This chain is Putative membrane protein insertion efficiency factor, found in Geobacillus sp. (strain WCH70).